The following is a 2174-amino-acid chain: Mediator of RNA polymerase II transcription subunit 13 (2174 aa).

Serine 395 carries the post-translational modification Phosphoserine. The disordered stretch occupies residues 435 to 477 (RNAGQQGQAPSLGQQQQILPKHKTNEKQEKSEKPQKRPLTPFH). The span at 438-451 (GQQGQAPSLGQQQQ) shows a compositional bias: low complexity. Basic and acidic residues predominate over residues 457 to 469 (KTNEKQEKSEKPQ). Serine 500, serine 504, serine 530, and serine 537 each carry phosphoserine. Basic and acidic residues predominate over residues 709-730 (FPDKKDRQNSEREAGKKHKVED). Disordered stretches follow at residues 709–735 (FPDK…TSSV), 749–769 (SPSI…PSTS), and 787–816 (FNSD…ESKT). Over residues 805 to 815 (SDDKASCKESK) the composition is skewed to basic and acidic residues. A phosphoserine mark is found at serine 826 and serine 890. The disordered stretch occupies residues 959-1054 (FIKEGDGSNM…ASTPSTCRPL (96 aa)). Positions 992–1003 (PPSNSGAGILPS) are enriched in low complexity. Positions 1004–1015 (PSTPRFPTPRTP) are enriched in pro residues. Serine 1029 bears the Phosphoserine mark. Polar residues predominate over residues 1040–1053 (DLYSPASTPSTCRP). 2 short sequence motifs (LXXLL motif) span residues 1188-1192 (LILLL) and 1279-1283 (LRMLL). 2 stretches are compositionally biased toward polar residues: residues 1484–1498 (SQSL…NTGN) and 1563–1606 (SMNS…SLPT). Disordered stretches follow at residues 1484-1505 (SQSL…PSAT), 1557-1617 (SFPP…ESTM), and 2015-2048 (LPAS…RLLS).

It belongs to the Mediator complex subunit 13 family. In terms of assembly, component of the Mediator complex, which is composed of MED1, MED4, MED6, MED7, MED8, MED9, MED10, MED11, MED12, MED13, MED13L, MED14, MED15, MED16, MED17, MED18, MED19, MED20, MED21, MED22, MED23, MED24, MED25, MED26, MED27, MED29, MED30, MED31, CCNC, CDK8 and CDC2L6/CDK11. The MED12, MED13, CCNC and CDK8 subunits form a distinct module termed the CDK8 module. Mediator containing the CDK8 module is less active than Mediator lacking this module in supporting transcriptional activation. Individual preparations of the Mediator complex lacking one or more distinct subunits have been variously termed ARC, CRSP, DRIP, PC2, SMCC and TRAP. In terms of tissue distribution, ubiquitous.

It is found in the nucleus. Functionally, component of the Mediator complex, a coactivator involved in the regulated transcription of nearly all RNA polymerase II-dependent genes. Mediator functions as a bridge to convey information from gene-specific regulatory proteins to the basal RNA polymerase II transcription machinery. Mediator is recruited to promoters by direct interactions with regulatory proteins and serves as a scaffold for the assembly of a functional preinitiation complex with RNA polymerase II and the general transcription factors. This chain is Mediator of RNA polymerase II transcription subunit 13, found in Homo sapiens (Human).